The sequence spans 1354 residues: Tensin homolog (1354 aa).

Residues 38–207 (MKDRKEGVQV…GYFSSLLSGR (170 aa)) enclose the Phosphatase tensin-type domain. The Phosphocysteine intermediate role is filled by cysteine 144. The region spanning 212-337 (SDPLYLHNII…VTVELVVSHT (126 aa)) is the C2 tensin-type domain. Disordered stretches follow at residues 380–442 (EYSE…DVVP), 597–616 (STLQRRPKPPARSGSYRTLN), 638–660 (SNTAPLPPPRRQEQHAGTRSVQL), 692–720 (DVRGGQQQQQEQHNASNDFNFSNTLNNTP), 734–754 (SVTTPRNHHFSTPSREQEADA), 794–879 (AANN…DRQR), and 1015–1035 (NGERGGSGHAAGGGGGGHNGY). The span at 391 to 401 (SSKSANPINNN) shows a compositional bias: polar residues. The segment covering 408 to 417 (VGPPVPPKPS) has biased composition (pro residues). Composition is skewed to polar residues over residues 704–720 (HNASNDFNFSNTLNNTP), 734–747 (SVTTPRNHHFSTPS), and 794–804 (AANNDENQHNL). Residues 821-843 (AEFRREEERLRNTRSPYGEERWR) are compositionally biased toward basic and acidic residues. Positions 1017 to 1033 (ERGGSGHAAGGGGGGHN) are enriched in gly residues. One can recognise an SH2 domain in the interval 1083 to 1187 (WYKPTISREQ…ALPTKLVLPD (105 aa)). A PTB domain is found at 1209 to 1353 (ACNVVYVGSV…NKVMLAQKNR (145 aa)).

This sequence belongs to the PTEN phosphatase protein family. As to quaternary structure, may interact (via SH2 domain) with receptor svh-2 (when tyrosine-phosphorylated). May interact (via C-terminus) with integrin pat-3. In terms of tissue distribution, expressed in ventral motor neurons, including ventral and dorsal D-type neurons, and in a subset of cells in the head.

It is found in the cell projection. The protein localises to the axon. It carries out the reaction O-phospho-L-tyrosyl-[protein] + H2O = L-tyrosyl-[protein] + phosphate. Probable phosphatase which regulates axon regeneration after injury by linking the svh-2 and integrin signaling pathways. In terms of biological role, not involved in axon regeneration after injury. The sequence is that of Tensin homolog from Caenorhabditis elegans.